A 1154-amino-acid polypeptide reads, in one-letter code: MINRDNKKAITKKGMISNRLNKFSIRKYTVGTASILVGTTLIFGLGNQEAKAAENTSTENAKQDDATTSDNKEVVSETENNSTTENNSTNPIKKETNTDSQPEAKKESTSSSTQKQQNNVTATTETKPQNIEKENVKPSTDKTATEDTSVILEEKKAPNNTNNDVTTKPSTSEPSTSEIQTKPTTPQESTNIENSQPQPTPSKVDNQVTDATNPKEPVNVSKEELKNNPEKLKELVRNDSNTDHSTKPVATAPTSVAPKRVNAKMRFAVAQPAAVASNNVNDLIKVTKQTIKVGDGKDNVAAAHDGKDIEYDTEFTIDNKVKKGDTMTINYDKNVIPSDLTDKNDPIDITDPSGEVIAKGTFDKATKQITYTFTDYVDKYEDIKSRLTLYSYIDKKTVPNETSLNLTFATAGKETSQNVTVDYQDPMVHGDSNIQSIFTKLDEDKQTIEQQIYVNPLKKSATNTKVDIAGSQVDDYGNIKLGNGSTIIDQNTEIKVYKVNSDQQLPQSNRIYDFSQYEDVTSQFDNKKSFSNNVATLDFGDINSAYIIKVVSKYTPTSDGELDIAQGTSMRTTDKYGYYNYAGYSNFIVTSNDTGGGDGTVKPEEKLYKIGDYVWEDVDKDGVQGTDSKEKPMANVLVTLTYPDGTTKSVRTDANGHYEFGGLKDGETYTVKFETPTGYLPTKVNGTTDGEKDSNGSSVTVKINGKDDMSLDTGFYKEPKYNLGDYVWEDTNKDGIQDANEPGIKDVKVTLKDSTGKVIGTTTTDASGKYKFTDLDNGNYTVEFETPAGYTPTVKNTTADDKDSNGLTTTGVIKDADNMTLDSGFYKTPKYSLGDYVWYDSNKDGKQDSTEKGIKDVTVTLQNEKGEVIGTTKTDENGKYRFDNLDSGKYKVIFEKPAGLTQTVTNTTEDDKDADGGEVDVTITDHDDFTLDNGYFEEDTSDSDSDSDSDSDSDSDSDSDSDSDSDSDSDSDSDSDSDSDSDSDSDSDSDSDSDSDSDSDSDSDSDSDSDSDSDSDSDSDSDSDSDSDSDSDSDSDSDSDSDSDSDSDSDSDSDSDSDSDSDSDSDSDSDSDSDSDSDSDSDSDSDSDSDSDSDAGKHTPVKPMSTTKDHHNKAKALPETGSENNGSNNATLFGGLFAALGSLLLFGRRKKQNK.

The N-terminal stretch at methionine 1 to alanine 52 is a signal peptide. A YSIRK-G/S signaling motif motif is present at residues phenylalanine 23 to serine 34. The segment at alanine 53–lysine 606 is ligand binding A region. Positions glutamate 54–glutamate 230 are disordered. The segment covering alanine 61–valine 75 has biased composition (basic and acidic residues). Low complexity predominate over residues glutamate 77–asparagine 90. Basic and acidic residues predominate over residues isoleucine 92 to serine 108. Residues asparagine 118–glutamine 129 show a composition bias toward polar residues. A compositionally biased stretch (basic and acidic residues) spans asparagine 130–threonine 145. Residues threonine 166–glutamate 178 are compositionally biased toward low complexity. Positions isoleucine 179–threonine 212 are enriched in polar residues. The segment covering serine 221–glutamate 230 has biased composition (basic and acidic residues). CNA-B domains lie at leucine 607–proline 719, lysine 720–proline 829, and lysine 830–threonine 940. The disordered stretch occupies residues valine 904–asparagine 1129. 2 stretches are compositionally biased toward acidic residues: residues threonine 908–glutamate 918 and tyrosine 935–serine 1093. The short motif at leucine 1117–glycine 1121 is the LPXTG sorting signal element. At threonine 1120 the chain carries Pentaglycyl murein peptidoglycan amidated threonine. The propeptide at glycine 1121–lysine 1154 is removed by sortase.

It belongs to the serine-aspartate repeat-containing protein (SDr) family. In terms of assembly, interacts with host complement factor H/CFAH (via C-terminus). Interacts with host complement regulator C4BPA.

Its subcellular location is the secreted. It is found in the cell wall. Its function is as follows. Cell surface-associated calcium-binding protein which plays an important role in adhesion and pathogenesis. Contributes to the resistance to killing by innate immune components in blood and thus attenuates bacterial clearance by interacting with host complement factor H/CFAH and modulating its activity. Also inhibits bacterial opsonization and killing by interacting with host complement regulator C4BPA and thus inhibiting classical complement pathway activation. The chain is Serine-aspartate repeat-containing protein E (sdrE) from Staphylococcus aureus (strain USA300).